A 293-amino-acid polypeptide reads, in one-letter code: Cytidine deaminase 8 (293 aa).

2 CMP/dCMP-type deaminase domains span residues 20-151 and 181-293; these read FTPQ…LISQ and EHCN…LHCK. 61-63 is a substrate binding site; it reads NVE. Position 74 (His-74) interacts with Zn(2+). The active-site Proton donor is Glu-76. The Zn(2+) site is built by Cys-107 and Cys-110.

It belongs to the cytidine and deoxycytidylate deaminase family. In terms of assembly, homodimer. It depends on Zn(2+) as a cofactor.

It carries out the reaction cytidine + H2O + H(+) = uridine + NH4(+). The catalysed reaction is 2'-deoxycytidine + H2O + H(+) = 2'-deoxyuridine + NH4(+). Functionally, this enzyme scavenges exogenous and endogenous cytidine and 2'-deoxycytidine for UMP synthesis. The protein is Cytidine deaminase 8 (CDA8) of Arabidopsis thaliana (Mouse-ear cress).